The following is a 250-amino-acid chain: MTEPVELSVELIACSSFTPPASVAWDTDAHGAEALVEFAGRACYETFDKPNPRTATNAAYLRHIMEVGHTALLEHASATMYIRGISRSATHELVRHRHFSFSQLSQRFVHEGEQEVIIPELINEDPQLRSLFLRAMDDNRFVYNELLNALEEKLEGEPNALLRKKQARQAARAVLPNATESRIVVTGNFRSWRHFLGMRASEHADVEIRAVAVACLEKLKQQAPTVFGDFQVETLADGTQMATSPYVTDF.

Residues 7–233 (LSVELIACSS…PTVFGDFQVE (227 aa)) form the ThyX domain. Residues 92-95 (ELVR), 103-107 (QLSQR), and R172 each bind dUMP. FAD is bound by residues 95-97 (RHR) and Q103. Residues 95 to 105 (RHRHFSFSQLS) carry the ThyX motif motif. Residues 188 to 190 (NFR) and H194 contribute to the FAD site. R199 contacts dUMP. The active-site Involved in ionization of N3 of dUMP, leading to its activation is R199.

This sequence belongs to the thymidylate synthase ThyX family. As to quaternary structure, homotetramer. Requires FAD as cofactor.

The catalysed reaction is dUMP + (6R)-5,10-methylene-5,6,7,8-tetrahydrofolate + NADPH + H(+) = dTMP + (6S)-5,6,7,8-tetrahydrofolate + NADP(+). It participates in pyrimidine metabolism; dTTP biosynthesis. In terms of biological role, catalyzes the reductive methylation of 2'-deoxyuridine-5'-monophosphate (dUMP) to 2'-deoxythymidine-5'-monophosphate (dTMP) while utilizing 5,10-methylenetetrahydrofolate (mTHF) as the methyl donor, and NADPH and FADH(2) as the reductant. The sequence is that of Flavin-dependent thymidylate synthase from Corynebacterium efficiens (strain DSM 44549 / YS-314 / AJ 12310 / JCM 11189 / NBRC 100395).